Reading from the N-terminus, the 509-residue chain is Metal transporter Nramp3 (509 aa).

A compositionally biased stretch (low complexity) spans 1-12 (MPQLENNEPLLI). A disordered region spans residues 1 to 25 (MPQLENNEPLLINEEEEEETAYDET). Residues 13 to 23 (NEEEEEETAYD) are compositionally biased toward acidic residues. 12 helical membrane passes run 56–76 (LWLF…PGNL), 84–104 (AVAG…GLLV), 133–153 (MVLW…EVIG), 165–185 (ILPL…FLFL), 193–213 (LEAV…WMFG), 239–259 (AVGV…SALV), 285–305 (IALF…AKGF), 327–347 (YGGG…AAGQ), 383–403 (IIPT…LDVL), 406–426 (WLNV…LCLV), 444–464 (IAWL…LEFF), and 472–492 (VYTG…LYLI).

The protein belongs to the NRAMP (TC 2.A.55) family. Expressed in vascular tissues.

The protein resides in the vacuole membrane. Functionally, vacuolar metal transporter involved in intracellular metal homeostasis. Can transport iron (Fe), manganese (Mn) and cadmium (Cd). Regulates metal accumulation under Fe starvation. Acts redundantly with NRAMP4 to mobilize vacuolar Fe and provide sufficient Fe during seed germination. In association with NRAMP4, required for optimal growth and photosynthesis under Mn deficiency. Exports Mn from vacuoles in leaf mesophyll cells, making Mn available for functional photosystem II in chloroplasts. Involved in basal resistance to the bacterial pathogen E.chrysanthemi. This is Metal transporter Nramp3 (NRAMP3) from Arabidopsis thaliana (Mouse-ear cress).